The following is an 82-amino-acid chain: Vejovine (82 aa).

Residues 1 to 22 form the signal peptide; it reads MNAKTLFVVFLIGMLVTEQVEA. The propeptide occupies 70 to 82; the sequence is MTLDEIVDAMYYD.

Belongs to the non-disulfide-bridged peptide (NDBP) superfamily. Long chain multifunctional peptide (group 2) family. Expressed by the venom gland.

It localises to the secreted. The protein resides in the target cell membrane. In terms of biological role, displays significant potent antimicrobial activity against clinical isolates of Gram-negative multidrug resistant strains of E.coli, P.aeruginosa and A.baumanii with MIC values as low as 4.4 uM. Additionally, it displays low cytolytic and hemolytic activity against human erythrocytes reaching 50% hemolysis at 100 uM. The sequence is that of Vejovine from Vaejovis mexicanus (Mexican scorpion).